We begin with the raw amino-acid sequence, 97 residues long: Large ribosomal subunit protein bL27 (97 aa).

Residues 1–9 (MFTFDLQLF) constitute a propeptide that is removed on maturation.

Belongs to the bacterial ribosomal protein bL27 family. Post-translationally, the N-terminus is cleaved by ribosomal processing cysteine protease Prp.

This is Large ribosomal subunit protein bL27 from Syntrophomonas wolfei subsp. wolfei (strain DSM 2245B / Goettingen).